The primary structure comprises 297 residues: Aspartate carbamoyltransferase catalytic subunit (297 aa).

Carbamoyl phosphate-binding residues include Arg-51 and Thr-52. Lys-79 contributes to the L-aspartate binding site. Carbamoyl phosphate-binding residues include Arg-101, His-129, and Gln-132. L-aspartate contacts are provided by Arg-162 and Arg-216. The carbamoyl phosphate site is built by Gly-257 and Pro-258.

This sequence belongs to the aspartate/ornithine carbamoyltransferase superfamily. ATCase family. In terms of assembly, heterododecamer (2C3:3R2) of six catalytic PyrB chains organized as two trimers (C3), and six regulatory PyrI chains organized as three dimers (R2).

It carries out the reaction carbamoyl phosphate + L-aspartate = N-carbamoyl-L-aspartate + phosphate + H(+). The protein operates within pyrimidine metabolism; UMP biosynthesis via de novo pathway; (S)-dihydroorotate from bicarbonate: step 2/3. Functionally, catalyzes the condensation of carbamoyl phosphate and aspartate to form carbamoyl aspartate and inorganic phosphate, the committed step in the de novo pyrimidine nucleotide biosynthesis pathway. The chain is Aspartate carbamoyltransferase catalytic subunit from Myxococcus xanthus (strain DK1622).